Consider the following 163-residue polypeptide: Interleukin-17F (163 aa).

A signal peptide spans 1–30; that stretch reads MTVKSLHVTAMVKYLLLLILGLAFLRETAA. Asn-83 is a glycosylation site (N-linked (GlcNAc...) asparagine). Cystine bridges form between Cys-102–Cys-152 and Cys-107–Cys-154.

This sequence belongs to the IL-17 family. As to quaternary structure, homodimer; disulfide-linked. Heterodimer with IL17A (IL17A-IL17F). Forms complexes with IL17RA and IL17RC receptors with 2:1 binding stoichiometry: two receptor chains for one interleukin molecule. IL17F homodimer forms predominantly complexes with IL17RC homodimer, whereas IL17A-IL17F favors complexes with IL17RA-IL17RC. IL17RA and IL17RC chains cannot distinguish between IL17A and IL17F molecules, potentially enabling the formation of topologically distinct complexes.

It is found in the secreted. Its function is as follows. Effector cytokine of innate and adaptive immune system involved in antimicrobial host defense and maintenance of tissue integrity. IL17A-IL17F signals via IL17RA-IL17RC heterodimeric receptor complex, triggering homotypic interaction of IL17RA and IL17RC chains with TRAF3IP2 adapter through SEFIR domains. This leads to downstream TRAF6-mediated activation of NF-kappa-B and MAPkinase pathways ultimately resulting in transcriptional activation of cytokines, chemokines, antimicrobial peptides and matrix metalloproteinases, with potential strong immune inflammation. IL17A-IL17F is primarily involved in host defense against extracellular bacteria and fungi by inducing neutrophilic inflammation. As signature effector cytokine of T-helper 17 cells (Th17), primarily induces neutrophil activation and recruitment at infection and inflammatory sites. Stimulates the production of antimicrobial beta-defensins DEFB1, DEFB103A, and DEFB104A by mucosal epithelial cells, limiting the entry of microbes through the epithelial barriers. IL17F homodimer can signal via IL17RC homodimeric receptor complex, triggering downstream activation of TRAF6 and NF-kappa-B signaling pathway. Via IL17RC induces transcriptional activation of IL33, a potent cytokine that stimulates group 2 innate lymphoid cells and adaptive T-helper 2 cells involved in pulmonary allergic response to fungi. Likely via IL17RC, promotes sympathetic innervation of peripheral organs by coordinating the communication between gamma-delta T cells and parenchymal cells. Stimulates sympathetic innervation of thermogenic adipose tissue by driving TGFB1 expression. Regulates the composition of intestinal microbiota and immune tolerance by inducing antimicrobial proteins that specifically control the growth of commensal Firmicutes and Bacteroidetes. This chain is Interleukin-17F (IL17F), found in Callithrix jacchus (White-tufted-ear marmoset).